The chain runs to 411 residues: uncharacterized protein (411 aa).

This sequence in the C-terminal section; belongs to the PAPS reductase family.

This is an uncharacterized protein from Methanocaldococcus jannaschii (strain ATCC 43067 / DSM 2661 / JAL-1 / JCM 10045 / NBRC 100440) (Methanococcus jannaschii).